The sequence spans 89 residues: Small ribosomal subunit protein uS14A (89 aa).

This sequence belongs to the universal ribosomal protein uS14 family. Part of the 30S ribosomal subunit. Contacts proteins S3 and S10.

Its function is as follows. Binds 16S rRNA, required for the assembly of 30S particles and may also be responsible for determining the conformation of the 16S rRNA at the A site. This chain is Small ribosomal subunit protein uS14A, found in Oceanobacillus iheyensis (strain DSM 14371 / CIP 107618 / JCM 11309 / KCTC 3954 / HTE831).